Reading from the N-terminus, the 128-residue chain is Large-conductance mechanosensitive channel (128 aa).

2 helical membrane-spanning segments follow: residues Phe-10–Gly-30 and Gly-76–Ile-96.

This sequence belongs to the MscL family. Homopentamer.

It localises to the cell inner membrane. Its function is as follows. Channel that opens in response to stretch forces in the membrane lipid bilayer. May participate in the regulation of osmotic pressure changes within the cell. The polypeptide is Large-conductance mechanosensitive channel (Haemophilus influenzae (strain 86-028NP)).